A 300-amino-acid chain; its full sequence is (R)-3-hydroxydecanoyl-ACP:CoA transacylase (300 aa).

In terms of domain architecture, AB hydrolase-1 spans 29–253 (TIILVNGSLS…HTIRNAGHFI (225 aa)).

It functions in the pathway polyester biosynthesis; polyhydroxyalkanoate biosynthesis. In terms of biological role, catalyzes the transfer of the acyl moiety from in vitro synthesized 3-hydroxydecanoyl-CoA to acyl carrier protein. The protein is (R)-3-hydroxydecanoyl-ACP:CoA transacylase (phaG) of Pseudomonas aeruginosa (strain ATCC 15692 / DSM 22644 / CIP 104116 / JCM 14847 / LMG 12228 / 1C / PRS 101 / PAO1).